The sequence spans 101 residues: NAD(P)H-quinone oxidoreductase subunit 4L, chloroplastic (101 aa).

Helical transmembrane passes span 2–22 (MFEH…YGLI), 32–52 (ICLE…SDLF), and 61–81 (IFAI…LSIL).

It belongs to the complex I subunit 4L family. NDH is composed of at least 16 different subunits, 5 of which are encoded in the nucleus.

The protein localises to the plastid. It is found in the chloroplast thylakoid membrane. The catalysed reaction is a plastoquinone + NADH + (n+1) H(+)(in) = a plastoquinol + NAD(+) + n H(+)(out). The enzyme catalyses a plastoquinone + NADPH + (n+1) H(+)(in) = a plastoquinol + NADP(+) + n H(+)(out). NDH shuttles electrons from NAD(P)H:plastoquinone, via FMN and iron-sulfur (Fe-S) centers, to quinones in the photosynthetic chain and possibly in a chloroplast respiratory chain. The immediate electron acceptor for the enzyme in this species is believed to be plastoquinone. Couples the redox reaction to proton translocation, and thus conserves the redox energy in a proton gradient. The protein is NAD(P)H-quinone oxidoreductase subunit 4L, chloroplastic of Agrostis stolonifera (Creeping bentgrass).